A 180-amino-acid chain; its full sequence is Ferric nitrobindin-like protein (180 aa).

Residues 21–27 carry the GXWXGXG motif; that stretch reads GRWEGAG.

This sequence belongs to the nitrobindin family.

In Kineococcus radiotolerans (strain ATCC BAA-149 / DSM 14245 / SRS30216), this protein is Ferric nitrobindin-like protein.